The chain runs to 113 residues: Flagellar hook-basal body complex protein FliE (113 aa).

This sequence belongs to the FliE family.

The protein localises to the bacterial flagellum basal body. In Rhizobium etli (strain CIAT 652), this protein is Flagellar hook-basal body complex protein FliE.